The chain runs to 315 residues: Methionyl-tRNA formyltransferase (315 aa).

A (6S)-5,6,7,8-tetrahydrofolate-binding site is contributed by 113–116 (SLLP).

The protein belongs to the Fmt family.

The enzyme catalyses L-methionyl-tRNA(fMet) + (6R)-10-formyltetrahydrofolate = N-formyl-L-methionyl-tRNA(fMet) + (6S)-5,6,7,8-tetrahydrofolate + H(+). In terms of biological role, attaches a formyl group to the free amino group of methionyl-tRNA(fMet). The formyl group appears to play a dual role in the initiator identity of N-formylmethionyl-tRNA by promoting its recognition by IF2 and preventing the misappropriation of this tRNA by the elongation apparatus. The sequence is that of Methionyl-tRNA formyltransferase from Escherichia coli (strain SE11).